The chain runs to 975 residues: Lateral signaling target protein 2 homolog (975 aa).

Disordered regions lie at residues 299–458 (PLGS…GTDE) and 504–523 (YGTAEQQGHQGLEEEEPSTS). 4 stretches are compositionally biased toward low complexity: residues 302-352 (SSSI…TTNT), 365-376 (NNHNSNSNSSSN), 383-400 (TLRSPSMLSLSTTSTPTA), and 408-429 (PSHSIASTSSAATSSTNPPADW). Acidic residues predominate over residues 430 to 458 (SDGDDEDEDDDDIDVDEEDPESSDDGTDE). Residues S540 and S541 each carry the phosphoserine modification. 2 disordered regions span residues 556–633 (EEHM…SSLS) and 740–891 (DNVF…SPPA). Residues 564-602 (GRHHRHHQSHHHHHHHRHSHQHQHRQPHPHRTTRSGRKR) are compositionally biased toward basic residues. Residues 621 to 633 (LASGDTSAASSLS) show a composition bias toward low complexity. The segment covering 751–770 (ATGQRHSAGASMQRNNTIDL) has biased composition (polar residues). S796 bears the Phosphoserine mark. Composition is skewed to low complexity over residues 802-860 (AASS…PVSA) and 877-890 (PSSATSTSATLSPP). An FYVE-type zinc finger spans residues 895–955 (DGKAPRCMAC…VCRDCYVREV (61 aa)). Residues C901, C904, C917, C920, C925, C928, C947, and C950 each contribute to the Zn(2+) site.

Belongs to the lst-2 family.

In terms of biological role, negative regulator of epidermal growth factor receptor (EGFR) signaling. The polypeptide is Lateral signaling target protein 2 homolog (Drosophila sechellia (Fruit fly)).